The chain runs to 194 residues: Probable GTP-binding protein EngB (194 aa).

Residues 19 to 193 enclose the EngB-type G domain; the sequence is DCIQICFWGR…VLFIEENIFK (175 aa). GTP-binding positions include 27 to 34, 53 to 57, 70 to 73, 137 to 140, and 172 to 174; these read GRSNVGKS, GRTQF, DLPG, TKID, and VSS. Mg(2+) is bound by residues Ser-34 and Thr-55.

This sequence belongs to the TRAFAC class TrmE-Era-EngA-EngB-Septin-like GTPase superfamily. EngB GTPase family. Mg(2+) is required as a cofactor.

Functionally, necessary for normal cell division and for the maintenance of normal septation. The chain is Probable GTP-binding protein EngB from Mycoplasmopsis agalactiae (strain NCTC 10123 / CIP 59.7 / PG2) (Mycoplasma agalactiae).